We begin with the raw amino-acid sequence, 396 residues long: Elongation factor Tu (396 aa).

Residues 10 to 206 enclose the tr-type G domain; the sequence is KPHINVGTIG…QMDAYIPEPQ (197 aa). Residues 19–26 form a G1 region; it reads GHVDHGKT. GTP is bound at residue 19-26; it reads GHVDHGKT. T26 is a Mg(2+) binding site. The segment at 60-64 is G2; it reads GITIA. A G3 region spans residues 81–84; it reads DCPG. GTP is bound by residues 81–85 and 136–139; these read DCPGH and NKAD. The segment at 136-139 is G4; it reads NKAD. Positions 174-176 are G5; it reads SAL.

Belongs to the TRAFAC class translation factor GTPase superfamily. Classic translation factor GTPase family. EF-Tu/EF-1A subfamily. In terms of assembly, monomer.

The protein localises to the cytoplasm. It carries out the reaction GTP + H2O = GDP + phosphate + H(+). Its function is as follows. GTP hydrolase that promotes the GTP-dependent binding of aminoacyl-tRNA to the A-site of ribosomes during protein biosynthesis. The sequence is that of Elongation factor Tu from Nitrosococcus oceani (strain ATCC 19707 / BCRC 17464 / JCM 30415 / NCIMB 11848 / C-107).